The chain runs to 204 residues: FMN-dependent NADH:quinone oxidoreductase 1 (204 aa).

FMN is bound by residues S10 and 15 to 17 (SLS).

This sequence belongs to the azoreductase type 1 family. As to quaternary structure, homodimer. Requires FMN as cofactor.

The catalysed reaction is 2 a quinone + NADH + H(+) = 2 a 1,4-benzosemiquinone + NAD(+). It catalyses the reaction N,N-dimethyl-1,4-phenylenediamine + anthranilate + 2 NAD(+) = 2-(4-dimethylaminophenyl)diazenylbenzoate + 2 NADH + 2 H(+). Its function is as follows. Quinone reductase that provides resistance to thiol-specific stress caused by electrophilic quinones. In terms of biological role, also exhibits azoreductase activity. Catalyzes the reductive cleavage of the azo bond in aromatic azo compounds to the corresponding amines. The polypeptide is FMN-dependent NADH:quinone oxidoreductase 1 (Rhizobium etli (strain ATCC 51251 / DSM 11541 / JCM 21823 / NBRC 15573 / CFN 42)).